The following is a 151-amino-acid chain: Small ribosomal subunit protein uS15 (151 aa).

The protein belongs to the universal ribosomal protein uS15 family.

This Anopheles gambiae (African malaria mosquito) protein is Small ribosomal subunit protein uS15 (RpS13).